Here is a 426-residue protein sequence, read N- to C-terminus: tRNA(Met) cytidine acetate ligase (426 aa).

ATP is bound by residues 7-20 (VVEY…HLFH), Gly101, Asn168, and Arg193.

It belongs to the TmcAL family.

The protein resides in the cytoplasm. It catalyses the reaction cytidine(34) in elongator tRNA(Met) + acetate + ATP = N(4)-acetylcytidine(34) in elongator tRNA(Met) + AMP + diphosphate. Catalyzes the formation of N(4)-acetylcytidine (ac(4)C) at the wobble position of elongator tRNA(Met), using acetate and ATP as substrates. First activates an acetate ion to form acetyladenylate (Ac-AMP) and then transfers the acetyl group to tRNA to form ac(4)C34. The polypeptide is tRNA(Met) cytidine acetate ligase (Kosmotoga olearia (strain ATCC BAA-1733 / DSM 21960 / TBF 19.5.1)).